The following is a 116-amino-acid chain: MEKKKEVRALAKYVKMSAHKVRRVINQIRGRSYEEALISLEFLPYRACYPLLQLVSSAAANANNNLGLKKDTLLISEAKVDEASVSKRFQPRAQGRAYSIQKDTCHITIKIRERSK.

It belongs to the universal ribosomal protein uL22 family. In terms of assembly, part of the 50S ribosomal subunit.

Its subcellular location is the plastid. It is found in the chloroplast. This protein binds specifically to 23S rRNA. In terms of biological role, the globular domain of the protein is located near the polypeptide exit tunnel on the outside of the subunit, while an extended beta-hairpin is found that lines the wall of the exit tunnel in the center of the 70S ribosome. This is Large ribosomal subunit protein uL22c (rpl22) from Psilotum nudum (Whisk fern).